We begin with the raw amino-acid sequence, 561 residues long: Chaperonin GroEL 1 (561 aa).

Residues 29-32, 86-90, Gly-413, and Asp-495 contribute to the ATP site; these read TMGP and DGTTT.

This sequence belongs to the chaperonin (HSP60) family. In terms of assembly, forms a cylinder of 14 subunits composed of two heptameric rings stacked back-to-back. Interacts with the co-chaperonin GroES.

It localises to the cytoplasm. It catalyses the reaction ATP + H2O + a folded polypeptide = ADP + phosphate + an unfolded polypeptide.. Functionally, together with its co-chaperonin GroES, plays an essential role in assisting protein folding. The GroEL-GroES system forms a nano-cage that allows encapsulation of the non-native substrate proteins and provides a physical environment optimized to promote and accelerate protein folding. This chain is Chaperonin GroEL 1, found in Trichodesmium erythraeum (strain IMS101).